The chain runs to 292 residues: Ribosomal protein L11 methyltransferase (292 aa).

The S-adenosyl-L-methionine site is built by Thr-136, Gly-159, Asp-181, and Asn-228.

Belongs to the methyltransferase superfamily. PrmA family.

It localises to the cytoplasm. It catalyses the reaction L-lysyl-[protein] + 3 S-adenosyl-L-methionine = N(6),N(6),N(6)-trimethyl-L-lysyl-[protein] + 3 S-adenosyl-L-homocysteine + 3 H(+). Functionally, methylates ribosomal protein L11. In Rhizobium rhizogenes (strain K84 / ATCC BAA-868) (Agrobacterium radiobacter), this protein is Ribosomal protein L11 methyltransferase.